Reading from the N-terminus, the 140-residue chain is FK506-binding protein 2 (140 aa).

An N-terminal signal peptide occupies residues Met-1–Ala-19. Positions Gly-43 to Gln-132 constitute a PPIase FKBP-type domain.

The protein belongs to the FKBP-type PPIase family. FKBP2 subfamily.

It localises to the endoplasmic reticulum. It catalyses the reaction [protein]-peptidylproline (omega=180) = [protein]-peptidylproline (omega=0). Inhibited by both FK506 and rapamycin. In terms of biological role, PPIases accelerate the folding of proteins. It catalyzes the cis-trans isomerization of proline imidic peptide bonds in oligopeptides. The sequence is that of FK506-binding protein 2 (FPR2) from Kluyveromyces lactis (strain ATCC 8585 / CBS 2359 / DSM 70799 / NBRC 1267 / NRRL Y-1140 / WM37) (Yeast).